The sequence spans 200 residues: Oligoribonuclease (200 aa).

The region spanning 20–183 (LVWLDMEMTG…ADIHESIDEL (164 aa)) is the Exonuclease domain. Tyrosine 141 is an active-site residue.

The protein belongs to the oligoribonuclease family.

Its subcellular location is the cytoplasm. 3'-to-5' exoribonuclease specific for small oligoribonucleotides. In Burkholderia vietnamiensis (strain G4 / LMG 22486) (Burkholderia cepacia (strain R1808)), this protein is Oligoribonuclease.